The sequence spans 244 residues: Reticulon-like protein B7 (244 aa).

In terms of domain architecture, Reticulon spans 70–244; the sequence is PADVLLWRDK…EAKFLSKIPH (175 aa). 3 consecutive transmembrane segments (helical) span residues 80 to 100, 103 to 123, and 172 to 192; these read KVTLGLLSAVTVIWLLFGFGG, LLTSLCRGSILFLLLSFLWSN, and FVMAVIGLWLVSVIGNWFSFL.

Its subcellular location is the endoplasmic reticulum membrane. This chain is Reticulon-like protein B7 (RTNLB7), found in Arabidopsis thaliana (Mouse-ear cress).